Consider the following 309-residue polypeptide: Ribonuclease Z (309 aa).

Zn(2+) is bound by residues histidine 63, histidine 65, aspartate 67, histidine 68, histidine 145, aspartate 216, and histidine 274. The Proton acceptor role is filled by aspartate 67.

This sequence belongs to the RNase Z family. As to quaternary structure, homodimer. Zn(2+) serves as cofactor.

The catalysed reaction is Endonucleolytic cleavage of RNA, removing extra 3' nucleotides from tRNA precursor, generating 3' termini of tRNAs. A 3'-hydroxy group is left at the tRNA terminus and a 5'-phosphoryl group is left at the trailer molecule.. Zinc phosphodiesterase, which displays some tRNA 3'-processing endonuclease activity. Probably involved in tRNA maturation, by removing a 3'-trailer from precursor tRNA. This chain is Ribonuclease Z, found in Streptococcus pneumoniae serotype 2 (strain D39 / NCTC 7466).